The chain runs to 115 residues: NADH-ubiquinone oxidoreductase chain 3 (115 aa).

A run of 3 helical transmembrane segments spans residues 3 to 23, 55 to 75, and 84 to 104; these read FVLALTINTLLALLLMILTFW, FFLVAITFLLFDLEIALLLPL, and LPLMTTSSLMLIIILALGLTY.

This sequence belongs to the complex I subunit 3 family. In terms of assembly, core subunit of respiratory chain NADH dehydrogenase (Complex I) which is composed of 45 different subunits. Interacts with TMEM186. Interacts with TMEM242.

It localises to the mitochondrion inner membrane. The catalysed reaction is a ubiquinone + NADH + 5 H(+)(in) = a ubiquinol + NAD(+) + 4 H(+)(out). Its function is as follows. Core subunit of the mitochondrial membrane respiratory chain NADH dehydrogenase (Complex I) which catalyzes electron transfer from NADH through the respiratory chain, using ubiquinone as an electron acceptor. Essential for the catalytic activity of complex I. In Pongo pygmaeus (Bornean orangutan), this protein is NADH-ubiquinone oxidoreductase chain 3.